Reading from the N-terminus, the 257-residue chain is UPF0246 protein BT_3869 (257 aa).

This sequence belongs to the UPF0246 family.

This is UPF0246 protein BT_3869 from Bacteroides thetaiotaomicron (strain ATCC 29148 / DSM 2079 / JCM 5827 / CCUG 10774 / NCTC 10582 / VPI-5482 / E50).